We begin with the raw amino-acid sequence, 67 residues long: Penaeidin-4c (67 aa).

The first 19 residues, 1–19, serve as a signal peptide directing secretion; that stretch reads MRLVVCLVFLASFALVCQG. Intrachain disulfides connect Cys42–Cys56, Cys45–Cys63, and Cys57–Cys64. At Arg66 the chain carries Arginine amide.

This sequence belongs to the penaeidin family.

The protein localises to the cytoplasmic granule. Its function is as follows. Antibacterial and antifungal activity. Presents chitin-binding activity. This chain is Penaeidin-4c, found in Penaeus vannamei (Whiteleg shrimp).